Consider the following 633-residue polypeptide: ATP-dependent clpX-like chaperone, mitochondrial (633 aa).

A mitochondrion-targeting transit peptide spans 1-56 (MSSCGACTCGAAAARLLTTSLTSAQRGISCGRIHVPVLGRLGTLDTQILRRAPLRT). The interval 65-101 (ASKDGTNKDGSGDGNKKSVTEGSSKKSGSGNSGKGGN) is disordered. Basic and acidic residues predominate over residues 69–83 (GTNKDGSGDGNKKSV). A compositionally biased stretch (low complexity) spans 84–93 (TEGSSKKSGS). In terms of domain architecture, ClpX-type ZB spans 93–146 (SGNSGKGGNQLRCPKCGDLCTHVETFVSSTRFVKCEKCHHFFVVLSEADSKKSI). Residues C105, C108, C127, and C130 each coordinate Zn(2+). 294 to 301 (PTGSGKTL) is an ATP binding site. An N6-acetyllysine modification is found at K437. Over residues 598 to 610 (KEPGYIRAPSKES) the composition is skewed to basic and acidic residues. The tract at residues 598–633 (KEPGYIRAPSKESSEEDYDSGVEEDGWPRQADAANS) is disordered. Acidic residues predominate over residues 611 to 622 (SEEDYDSGVEED). S617 carries the phosphoserine modification.

The protein belongs to the ClpX chaperone family. As to quaternary structure, homohexamer that forms a ring structure; this hexamerization requires ATP binding. Component of the ClpXP complex formed by the assembly of two CLPP heptameric rings with two CLPX hexameric rings, giving rise to a symmetrical structure with two central CLPP rings flanked by a CLPX ring at either end of the complex. Interacts with TFAM.

Its subcellular location is the mitochondrion. The protein localises to the mitochondrion matrix. It localises to the mitochondrion nucleoid. It carries out the reaction ATP + H2O = ADP + phosphate + H(+). Functionally, ATP-dependent chaperone that functions as an unfoldase. As part of the ClpXP protease complex, it recognizes specific protein substrates, unfolds them using energy derived from ATP hydrolysis, and then translocates them to the proteolytic subunit (CLPP) of the ClpXP complex for degradation. Thanks to its chaperone activity, it also functions in the incorporation of the pyridoxal phosphate cofactor into 5-aminolevulinate synthase, thereby activating 5-aminolevulinate (ALA) synthesis, the first step in heme biosynthesis. This chaperone is also involved in the control of mtDNA nucleoid distribution, by regulating mitochondrial transcription factor A (TFAM) activity. The sequence is that of ATP-dependent clpX-like chaperone, mitochondrial from Rattus norvegicus (Rat).